A 138-amino-acid polypeptide reads, in one-letter code: Actophorin (138 aa).

The region spanning 3–134 (GIQLADEVTS…NLDEVIAKVK (132 aa)) is the ADF-H domain.

Belongs to the actin-binding proteins ADF family. Interacts with F-actin. Does not interact with G-actin. Interacts with 14-3-3 protein 3.

Its subcellular location is the cytoplasm. The protein localises to the cytoskeleton. The protein resides in the cell membrane. It localises to the cell projection. It is found in the phagocytic cup. Its subcellular location is the pseudopodium. Actin-binding protein that severs actin filaments. The polypeptide is Actophorin (Entamoeba histolytica (strain ATCC 30459 / HM-1:IMSS / ABRM)).